The following is a 238-amino-acid chain: Probable RNA/DNA demethylase ALKBH6 (238 aa).

One can recognise a Fe2OG dioxygenase domain in the interval 96–227 (PANHVLVNQY…RVSLTIRRVP (132 aa)). Residues Asn-103 and Tyr-105 each coordinate 2-oxoglutarate. Fe cation-binding residues include His-114 and Asp-116. Positions 138–161 (YEPRRPEDDDPTEQPRPPPRPTTS) are disordered. His-182 contributes to the Fe cation binding site. Positions 218 and 220 each coordinate 2-oxoglutarate.

This sequence belongs to the alkB family. As to quaternary structure, interacts with VCPKMT. It depends on Fe(2+) as a cofactor. As to expression, widely expressed, with highest expression in testis and pancreas.

The protein localises to the cytoplasm. The protein resides in the nucleus. Probable Fe(2+)/2-oxoglutarate-dependent dioxygenase involved in oxidative demethylation of nucleic acids. Binds nucleic acids with a preference for ssDNA or ssRNA to other types of DNAs. May play a role in nucleic acid damage repair. The chain is Probable RNA/DNA demethylase ALKBH6 from Homo sapiens (Human).